Reading from the N-terminus, the 2291-residue chain is Protein Ycf2 B (2291 aa).

An ATP-binding site is contributed by 1642 to 1649 (GSIGTGRS).

Belongs to the Ycf2 family.

It localises to the plastid. The protein resides in the chloroplast stroma. Probable ATPase of unknown function. Its presence in a non-photosynthetic plant (Epifagus virginiana) and experiments in tobacco indicate that it has an essential function which is probably not related to photosynthesis. The sequence is that of Protein Ycf2 B (ycf2-B) from Atropa belladonna (Belladonna).